The chain runs to 156 residues: Class I hydrophobin B (156 aa).

The signal sequence occupies residues 1 to 18 (MQFTLSAVVLALAGFSAA). 4 disulfides stabilise this stretch: Cys-52/Cys-130, Cys-60/Cys-124, Cys-61/Cys-101, and Cys-131/Cys-149.

The protein belongs to the fungal hydrophobin family.

The protein resides in the secreted. It localises to the cell wall. Its function is as follows. Aerial growth, conidiation, and dispersal of filamentous fungi in the environment rely upon a capability of their secreting small amphipathic proteins called hydrophobins (HPBs) with low sequence identity. Class I can self-assemble into an outermost layer of rodlet bundles on aerial cell surfaces, conferring cellular hydrophobicity that supports fungal growth, development and dispersal; whereas Class II form highly ordered films at water-air interfaces through intermolecular interactions but contribute nothing to the rodlet structure. In P.expansum, hydrophobins contribute to germination, tolerance to cold stress and mycotoxins patulin and citrinin production. HfbA and HfbB are essential for fungal surface hydrophobicity. This is Class I hydrophobin B from Penicillium expansum (Blue mold rot fungus).